Consider the following 98-residue polypeptide: NADH-ubiquinone oxidoreductase chain 4L (98 aa).

Helical transmembrane passes span 1-21 (MSLV…GLLM), 29-49 (ALLC…LTIL), and 61-81 (IILL…LVMV).

The protein belongs to the complex I subunit 4L family. Core subunit of respiratory chain NADH dehydrogenase (Complex I) which is composed of 45 different subunits.

It localises to the mitochondrion inner membrane. The enzyme catalyses a ubiquinone + NADH + 5 H(+)(in) = a ubiquinol + NAD(+) + 4 H(+)(out). In terms of biological role, core subunit of the mitochondrial membrane respiratory chain NADH dehydrogenase (Complex I) which catalyzes electron transfer from NADH through the respiratory chain, using ubiquinone as an electron acceptor. Part of the enzyme membrane arm which is embedded in the lipid bilayer and involved in proton translocation. The chain is NADH-ubiquinone oxidoreductase chain 4L (MT-ND4L) from Lagenorhynchus albirostris (White-beaked dolphin).